The sequence spans 161 residues: Allophycocyanin alpha chain (161 aa).

Asn-71 carries the post-translational modification N4-methylasparagine. Cys-81 serves as a coordination point for (2R,3E)-phycocyanobilin.

The protein belongs to the phycobiliprotein family. As to quaternary structure, heterodimer of an alpha and a beta chain. Contains one covalently linked phycocyanobilin chromophore.

Its subcellular location is the plastid. The protein localises to the chloroplast thylakoid membrane. In terms of biological role, light-harvesting photosynthetic bile pigment-protein from the phycobiliprotein complex. Allophycocyanin has a maximum absorption at approximately 650 nanometers. In Porphyra purpurea (Red seaweed), this protein is Allophycocyanin alpha chain (apcA).